Here is a 657-residue protein sequence, read N- to C-terminus: Tyramine beta-hydroxylase (657 aa).

The helical transmembrane segment at 77-97 (VALLFLLVAYCGGVVHAGEIV) threads the bilayer. A DOMON domain is found at 103 to 214 (TNVTVKWHTD…GTTQFYIAAS (112 aa)). Residues N104 and N143 are each glycosylated (N-linked (GlcNAc...) asparagine). The active site involves Y278. Intrachain disulfides connect C280-C330 and C319-C342. The Cu(2+) site is built by H312 and H313. Positions 380, 458, 460, and 533 each coordinate Cu(2+). 3 cysteine pairs are disulfide-bonded: C437/C549, C441/C606, and C512/C534. The active site involves H458. N555 carries N-linked (GlcNAc...) asparagine glycosylation.

The protein belongs to the copper type II ascorbate-dependent monooxygenase family. Cu(2+) serves as cofactor. In terms of tissue distribution, present in synaptic regions of RIC interneurons. Present in gonadal sheath cells of hermaphrodites (at protein level).

The protein localises to the membrane. The catalysed reaction is tyramine + L-ascorbate + O2 = (R)-octopamine + L-dehydroascorbate + H2O. Required for the conversion of tyramine to octopamine, a precursor of octapamine but probably itself a neurotransmitter. Involved in the regulation of egg laying, which is inhibited by tyramine. Due to its involvement in octopamine biosynthesis, also required for crtc-1-dependent regulation of AMPK-mediated longevity. The sequence is that of Tyramine beta-hydroxylase from Caenorhabditis elegans.